The primary structure comprises 476 residues: uncharacterized protein (476 aa).

The protein belongs to the herpesviridae US22 family.

This is an uncharacterized protein from Homo sapiens (Human).